Reading from the N-terminus, the 208-residue chain is MFDIGVGELTLIAVVALVVLGPERLPKAARFAGLWVRRARMQWDSVKQELERELEAEELKRSLQDVQASLREAEDQLRNTQQQVEQGARTLHDDVSRDIDIRASATPVATPLELAHADLSASPDVDATAGVTDAAGAAHTAPVIAQAQPIAPAPHQTLVPAPHDTIVPAPHAAHLASAPEPVAVAPVDAGTPAAWTPSAPAKLQEKQP.

Residues 1 to 21 (MFDIGVGELTLIAVVALVVLG) form a helical membrane-spanning segment. A compositionally biased stretch (low complexity) spans 178 to 189 (APEPVAVAPVDA). The tract at residues 178-208 (APEPVAVAPVDAGTPAAWTPSAPAKLQEKQP) is disordered.

It belongs to the TatB family. In terms of assembly, the Tat system comprises two distinct complexes: a TatABC complex, containing multiple copies of TatA, TatB and TatC subunits, and a separate TatA complex, containing only TatA subunits. Substrates initially bind to the TatABC complex, which probably triggers association of the separate TatA complex to form the active translocon.

It localises to the cell inner membrane. Its function is as follows. Part of the twin-arginine translocation (Tat) system that transports large folded proteins containing a characteristic twin-arginine motif in their signal peptide across membranes. Together with TatC, TatB is part of a receptor directly interacting with Tat signal peptides. TatB may form an oligomeric binding site that transiently accommodates folded Tat precursor proteins before their translocation. The polypeptide is Sec-independent protein translocase protein TatB (Xanthomonas euvesicatoria pv. vesicatoria (strain 85-10) (Xanthomonas campestris pv. vesicatoria)).